A 292-amino-acid polypeptide reads, in one-letter code: MSLFDWFADRRKGQYVGKVNQEPDEGDGLWSKCPECGQVVYRKDLLSNASVCGNCGYHHRIDSTERIAVLVDPNSFVPMDQELQPTDPLGFKDRRAYADRLRETQASTGLRDGVITGLCEVEGIPMALAVMDFRFMGGSMGSVVGEKITRLVEVATAKKLPLLIVCASGGARMQEGMLSLMQMAKISGALERHREAGVLYMPLLTHPTTGGVTASFAMLGDLILAEPKALIGFAGRRVIEQTLREKLPDNFQTAEYLQEHGFVDSIVPRTQLRSTLASLLRLHGCESRVASS.

The CoA carboxyltransferase N-terminal domain occupies 29 to 292; it reads LWSKCPECGQ…HGCESRVASS (264 aa). Zn(2+)-binding residues include Cys33, Cys36, Cys52, and Cys55. A C4-type zinc finger spans residues 33-55; sequence CPECGQVVYRKDLLSNASVCGNC.

Belongs to the AccD/PCCB family. In terms of assembly, acetyl-CoA carboxylase is a heterohexamer composed of biotin carboxyl carrier protein (AccB), biotin carboxylase (AccC) and two subunits each of ACCase subunit alpha (AccA) and ACCase subunit beta (AccD). It depends on Zn(2+) as a cofactor.

The protein resides in the cytoplasm. It catalyses the reaction N(6)-carboxybiotinyl-L-lysyl-[protein] + acetyl-CoA = N(6)-biotinyl-L-lysyl-[protein] + malonyl-CoA. It participates in lipid metabolism; malonyl-CoA biosynthesis; malonyl-CoA from acetyl-CoA: step 1/1. Functionally, component of the acetyl coenzyme A carboxylase (ACC) complex. Biotin carboxylase (BC) catalyzes the carboxylation of biotin on its carrier protein (BCCP) and then the CO(2) group is transferred by the transcarboxylase to acetyl-CoA to form malonyl-CoA. This Synechococcus sp. (strain CC9311) protein is Acetyl-coenzyme A carboxylase carboxyl transferase subunit beta.